Reading from the N-terminus, the 81-residue chain is RBAK downstream neighbor protein (81 aa).

The signal sequence occupies residues 1–22; that stretch reads MWPPLLLLLLLLPAAPVPTAKA.

It localises to the secreted. In Homo sapiens (Human), this protein is RBAK downstream neighbor protein (RBAKDN).